Reading from the N-terminus, the 853-residue chain is uncharacterized protein (853 aa).

Coiled coils occupy residues 313-343 and 480-528; these read RTDEDFKEAAKKREESEKRMNKMLENRLKVA and EGQV…SELI.

This is an uncharacterized protein from Ostreid herpesvirus 1 (isolate France) (OsHV-1).